A 399-amino-acid chain; its full sequence is Elongation factor Tu (399 aa).

The tr-type G domain maps to 10–207 (KPHMNVGTIG…AMDTYFPDPV (198 aa)). The interval 19-26 (GQIDHGKT) is G1. 19 to 26 (GQIDHGKT) provides a ligand contact to GTP. A Mg(2+)-binding site is contributed by threonine 26. Residues 60-64 (GITIN) are G2. The tract at residues 81-84 (DCPG) is G3. GTP-binding positions include 81–85 (DCPGH) and 136–139 (NKVD). Positions 136-139 (NKVD) are G4. A G5 region spans residues 173 to 175 (SAL).

This sequence belongs to the TRAFAC class translation factor GTPase superfamily. Classic translation factor GTPase family. EF-Tu/EF-1A subfamily. In terms of assembly, monomer.

It localises to the cytoplasm. The enzyme catalyses GTP + H2O = GDP + phosphate + H(+). GTP hydrolase that promotes the GTP-dependent binding of aminoacyl-tRNA to the A-site of ribosomes during protein biosynthesis. This is Elongation factor Tu from Fervidobacterium islandicum.